A 1000-amino-acid chain; its full sequence is UPF0182 protein SCO5204 (1000 aa).

The next 7 helical transmembrane spans lie at Leu26 to Thr48, Ile70 to His92, Trp121 to Arg143, Phe177 to Leu199, Leu220 to Leu237, Leu267 to Trp289, and Pro296 to Val318. Disordered regions lie at residues Ala884 to Val908 and Glu943 to Gly1000. Residues Gln888–Thr897 show a composition bias toward acidic residues. Basic and acidic residues-rich tracts occupy residues Glu943–Ala953 and Asn963–Gly984.

It belongs to the UPF0182 family.

The protein localises to the cell membrane. This is UPF0182 protein SCO5204 from Streptomyces coelicolor (strain ATCC BAA-471 / A3(2) / M145).